The primary structure comprises 151 residues: Glutamate mutase sigma subunit 1 (151 aa).

A B12-binding domain is found at 7-140 (PRTVILGVIG…EMLREDLQLT (134 aa)). Adenosylcob(III)alamin-binding positions include 17–21 (SDAHV), His-20, 65–67 (SSL), and 96–100 (NLAVG).

It belongs to the methylaspartate mutase GlmS subunit family. As to quaternary structure, heterotetramer composed of 2 epsilon subunits (GlmE) and 2 sigma subunits (GlmS). GlmE exists as a homodimer and GlmS as a monomer. Adenosylcob(III)alamin is required as a cofactor.

The enzyme catalyses (2S,3S)-3-methyl-L-aspartate = L-glutamate. It functions in the pathway amino-acid degradation; L-glutamate degradation via mesaconate pathway; acetate and pyruvate from L-glutamate: step 1/4. Catalyzes the carbon skeleton rearrangement of L-glutamate to L-threo-3-methylaspartate ((2S,3S)-3-methylaspartate). The chain is Glutamate mutase sigma subunit 1 from Haloarcula marismortui (strain ATCC 43049 / DSM 3752 / JCM 8966 / VKM B-1809) (Halobacterium marismortui).